Here is a 283-residue protein sequence, read N- to C-terminus: Movement protein (283 aa).

Belongs to the cucumovirus movement protein family.

It is found in the host cell junction. The protein localises to the host plasmodesma. Transports viral genome to neighboring plant cells directly through plasmosdesmata, without any budding. The movement protein allows efficient cell to cell propagation, by bypassing the host cell wall barrier. Acts by forming a tubular structure at the host plasmodesmata, enlarging it enough to allow free passage of virion capsids. This Cucumis sativus (Cucumber) protein is Movement protein.